The primary structure comprises 216 residues: MSIAIIDYGSGNLHSAAKAFERAARSLEDPQKVFVTSDPDQAYGADRLVLPGVGAFADCRRGLDAVNGMVEAITEAVRVKARPMFGICVGMQLFATRGKEHVITQGLNWIGGDVEKITPRDESLKIPHMGWNTLDVLREHPVLNKLPLGPKGQHAYFVHSYHLNAANEADVLARADYGGPVTAIVAKDTAIGTQFHPEKSQRFGLALISNFLRWKP.

A Glutamine amidotransferase type-1 domain is found at 2 to 216 (SIAIIDYGSG…LISNFLRWKP (215 aa)). Cys88 (nucleophile) is an active-site residue. Residues His196 and Glu198 contribute to the active site.

As to quaternary structure, heterodimer of HisH and HisF.

The protein localises to the cytoplasm. The catalysed reaction is 5-[(5-phospho-1-deoxy-D-ribulos-1-ylimino)methylamino]-1-(5-phospho-beta-D-ribosyl)imidazole-4-carboxamide + L-glutamine = D-erythro-1-(imidazol-4-yl)glycerol 3-phosphate + 5-amino-1-(5-phospho-beta-D-ribosyl)imidazole-4-carboxamide + L-glutamate + H(+). It catalyses the reaction L-glutamine + H2O = L-glutamate + NH4(+). It functions in the pathway amino-acid biosynthesis; L-histidine biosynthesis; L-histidine from 5-phospho-alpha-D-ribose 1-diphosphate: step 5/9. IGPS catalyzes the conversion of PRFAR and glutamine to IGP, AICAR and glutamate. The HisH subunit catalyzes the hydrolysis of glutamine to glutamate and ammonia as part of the synthesis of IGP and AICAR. The resulting ammonia molecule is channeled to the active site of HisF. The protein is Imidazole glycerol phosphate synthase subunit HisH of Bradyrhizobium diazoefficiens (strain JCM 10833 / BCRC 13528 / IAM 13628 / NBRC 14792 / USDA 110).